A 457-amino-acid chain; its full sequence is Siroheme synthase (457 aa).

Residues 1 to 204 are precorrin-2 dehydrogenase /sirohydrochlorin ferrochelatase; sequence MEIFPISLKL…DNLDIANQMM (204 aa). Residues 22-23 and 43-44 contribute to the NAD(+) site; these read HI and PD. Position 129 is a phosphoserine (Ser-129). The segment at 216–457 is uroporphyrinogen-III C-methyltransferase; sequence GEVYLVGAGP…VSLREQLQWL (242 aa). Pro-225 contributes to the S-adenosyl-L-methionine binding site. Asp-248 acts as the Proton acceptor in catalysis. Lys-270 serves as the catalytic Proton donor. S-adenosyl-L-methionine-binding positions include 301-303, Ile-306, 331-332, Met-383, and Gly-412; these read GGD and TA.

It in the N-terminal section; belongs to the precorrin-2 dehydrogenase / sirohydrochlorin ferrochelatase family. The protein in the C-terminal section; belongs to the precorrin methyltransferase family.

It carries out the reaction uroporphyrinogen III + 2 S-adenosyl-L-methionine = precorrin-2 + 2 S-adenosyl-L-homocysteine + H(+). The catalysed reaction is precorrin-2 + NAD(+) = sirohydrochlorin + NADH + 2 H(+). The enzyme catalyses siroheme + 2 H(+) = sirohydrochlorin + Fe(2+). It functions in the pathway cofactor biosynthesis; adenosylcobalamin biosynthesis; precorrin-2 from uroporphyrinogen III: step 1/1. It participates in cofactor biosynthesis; adenosylcobalamin biosynthesis; sirohydrochlorin from precorrin-2: step 1/1. Its pathway is porphyrin-containing compound metabolism; siroheme biosynthesis; precorrin-2 from uroporphyrinogen III: step 1/1. The protein operates within porphyrin-containing compound metabolism; siroheme biosynthesis; siroheme from sirohydrochlorin: step 1/1. It functions in the pathway porphyrin-containing compound metabolism; siroheme biosynthesis; sirohydrochlorin from precorrin-2: step 1/1. In terms of biological role, multifunctional enzyme that catalyzes the SAM-dependent methylations of uroporphyrinogen III at position C-2 and C-7 to form precorrin-2 via precorrin-1. Then it catalyzes the NAD-dependent ring dehydrogenation of precorrin-2 to yield sirohydrochlorin. Finally, it catalyzes the ferrochelation of sirohydrochlorin to yield siroheme. The sequence is that of Siroheme synthase from Acinetobacter baylyi (strain ATCC 33305 / BD413 / ADP1).